The primary structure comprises 583 residues: CTP synthase (583 aa).

Positions 1–278 (MRRHPQTATK…DAFVVRRLNL (278 aa)) are amidoligase domain. Ser20 is a CTP binding site. Residue Ser20 participates in UTP binding. ATP contacts are provided by residues 21–26 (SLGKGL) and Asp78. Residues Asp78 and Glu152 each coordinate Mg(2+). CTP-binding positions include 159–161 (DIE), 199–204 (KTKPTQ), and Lys235. UTP contacts are provided by residues 199-204 (KTKPTQ) and Lys235. The Glutamine amidotransferase type-1 domain occupies 303-551 (RIALVGKYVE…VKAAIDYKEG (249 aa)). Gly366 lines the L-glutamine pocket. Catalysis depends on Cys393, which acts as the Nucleophile; for glutamine hydrolysis. L-glutamine is bound by residues 394 to 397 (LGLQ), Glu416, and Arg477. Catalysis depends on residues His524 and Glu526. The interval 559–583 (PERVSNGAERRDQVGQSIPEPANRG) is disordered.

The protein belongs to the CTP synthase family. Homotetramer.

The catalysed reaction is UTP + L-glutamine + ATP + H2O = CTP + L-glutamate + ADP + phosphate + 2 H(+). It carries out the reaction L-glutamine + H2O = L-glutamate + NH4(+). It catalyses the reaction UTP + NH4(+) + ATP = CTP + ADP + phosphate + 2 H(+). The protein operates within pyrimidine metabolism; CTP biosynthesis via de novo pathway; CTP from UDP: step 2/2. With respect to regulation, allosterically activated by GTP, when glutamine is the substrate; GTP has no effect on the reaction when ammonia is the substrate. The allosteric effector GTP functions by stabilizing the protein conformation that binds the tetrahedral intermediate(s) formed during glutamine hydrolysis. Inhibited by the product CTP, via allosteric rather than competitive inhibition. In terms of biological role, catalyzes the ATP-dependent amination of UTP to CTP with either L-glutamine or ammonia as the source of nitrogen. Regulates intracellular CTP levels through interactions with the four ribonucleotide triphosphates. This is CTP synthase from Mycobacterium ulcerans (strain Agy99).